The primary structure comprises 422 residues: L-threonine dehydratase biosynthetic IlvA (422 aa).

K56 is modified (N6-(pyridoxal phosphate)lysine). Pyridoxal 5'-phosphate-binding positions include N83, 189-193 (GGGGL), and S315. An ACT-like domain is found at 339 to 413 (HYFILNFPQR…FDKSNIYINE (75 aa)).

This sequence belongs to the serine/threonine dehydratase family. In terms of assembly, homotetramer. Requires pyridoxal 5'-phosphate as cofactor.

The enzyme catalyses L-threonine = 2-oxobutanoate + NH4(+). It participates in amino-acid biosynthesis; L-isoleucine biosynthesis; 2-oxobutanoate from L-threonine: step 1/1. In terms of biological role, catalyzes the anaerobic formation of alpha-ketobutyrate and ammonia from threonine in a two-step reaction. The first step involved a dehydration of threonine and a production of enamine intermediates (aminocrotonate), which tautomerizes to its imine form (iminobutyrate). Both intermediates are unstable and short-lived. The second step is the nonenzymatic hydrolysis of the enamine/imine intermediates to form 2-ketobutyrate and free ammonia. In the low water environment of the cell, the second step is accelerated by RidA. In Staphylococcus saprophyticus subsp. saprophyticus (strain ATCC 15305 / DSM 20229 / NCIMB 8711 / NCTC 7292 / S-41), this protein is L-threonine dehydratase biosynthetic IlvA (ilvA).